A 273-amino-acid chain; its full sequence is Ribosomal RNA small subunit methyltransferase A (273 aa).

S-adenosyl-L-methionine contacts are provided by N18, L20, G45, E66, D91, and N113.

This sequence belongs to the class I-like SAM-binding methyltransferase superfamily. rRNA adenine N(6)-methyltransferase family. RsmA subfamily.

The protein resides in the cytoplasm. It catalyses the reaction adenosine(1518)/adenosine(1519) in 16S rRNA + 4 S-adenosyl-L-methionine = N(6)-dimethyladenosine(1518)/N(6)-dimethyladenosine(1519) in 16S rRNA + 4 S-adenosyl-L-homocysteine + 4 H(+). Its function is as follows. Specifically dimethylates two adjacent adenosines (A1518 and A1519) in the loop of a conserved hairpin near the 3'-end of 16S rRNA in the 30S particle. May play a critical role in biogenesis of 30S subunits. In Shigella boydii serotype 4 (strain Sb227), this protein is Ribosomal RNA small subunit methyltransferase A.